A 207-amino-acid polypeptide reads, in one-letter code: Probable nicotinate-nucleotide adenylyltransferase (207 aa).

Belongs to the NadD family.

It carries out the reaction nicotinate beta-D-ribonucleotide + ATP + H(+) = deamido-NAD(+) + diphosphate. It participates in cofactor biosynthesis; NAD(+) biosynthesis; deamido-NAD(+) from nicotinate D-ribonucleotide: step 1/1. Catalyzes the reversible adenylation of nicotinate mononucleotide (NaMN) to nicotinic acid adenine dinucleotide (NaAD). The sequence is that of Probable nicotinate-nucleotide adenylyltransferase from Synechococcus sp. (strain JA-3-3Ab) (Cyanobacteria bacterium Yellowstone A-Prime).